A 67-amino-acid chain; its full sequence is uncharacterized protein (67 aa).

A helical transmembrane segment spans residues 12–34 (YYYAHQTVCITSTGFALCFVVQA).

The protein localises to the membrane. This is an uncharacterized protein from Saccharomyces cerevisiae (strain ATCC 204508 / S288c) (Baker's yeast).